The chain runs to 314 residues: Dihydroorotate dehydrogenase (fumarate) (314 aa).

Substrate contacts are provided by residues lysine 46, 70–74, and asparagine 130; that span reads NSMGL. Residue 46-47 participates in FMN binding; sequence KS. Asparagine 130 serves as a coordination point for FMN. Catalysis depends on nucleophile residues serine 132 and cysteine 133. 2 residues coordinate FMN: lysine 167 and isoleucine 195. 196–197 is a substrate binding site; sequence NS. FMN is bound by residues glycine 224, 252-253, and 274-275; these read GG and GT.

This sequence belongs to the dihydroorotate dehydrogenase family. Type 1 subfamily. In terms of assembly, homodimer. Requires FMN as cofactor.

Its subcellular location is the cytoplasm. It catalyses the reaction (S)-dihydroorotate + fumarate = orotate + succinate. It participates in pyrimidine metabolism; UMP biosynthesis via de novo pathway. Catalyzes the conversion of dihydroorotate to orotate with fumarate as the electron acceptor. This is Dihydroorotate dehydrogenase (fumarate) (URA1) from Saccharomyces paradoxus (Yeast).